We begin with the raw amino-acid sequence, 439 residues long: 3-phosphoshikimate 1-carboxyvinyltransferase (439 aa).

Residues Lys-27, Ser-28, and Arg-32 each coordinate 3-phosphoshikimate. Lys-27 provides a ligand contact to phosphoenolpyruvate. Residues Gly-101 and Arg-130 each coordinate phosphoenolpyruvate. 3-phosphoshikimate-binding residues include Ser-175, Gln-177, Asp-326, and Lys-353. Gln-177 is a phosphoenolpyruvate binding site. Asp-326 (proton acceptor) is an active-site residue. The phosphoenolpyruvate site is built by Arg-357 and Arg-399.

Belongs to the EPSP synthase family. As to quaternary structure, monomer.

It localises to the cytoplasm. It catalyses the reaction 3-phosphoshikimate + phosphoenolpyruvate = 5-O-(1-carboxyvinyl)-3-phosphoshikimate + phosphate. Its pathway is metabolic intermediate biosynthesis; chorismate biosynthesis; chorismate from D-erythrose 4-phosphate and phosphoenolpyruvate: step 6/7. In terms of biological role, catalyzes the transfer of the enolpyruvyl moiety of phosphoenolpyruvate (PEP) to the 5-hydroxyl of shikimate-3-phosphate (S3P) to produce enolpyruvyl shikimate-3-phosphate and inorganic phosphate. In Synechococcus sp. (strain WH7803), this protein is 3-phosphoshikimate 1-carboxyvinyltransferase.